The following is a 538-amino-acid chain: Natural resistance-associated macrophage protein 1 (538 aa).

The interval 1–36 (MTGDTDPPKQSRTQYGSISSSPSPGPPQVPPGGTYL) is disordered. The Cytoplasmic portion of the chain corresponds to 1–54 (MTGDTDPPKQSRTQYGSISSSPSPGPPQVPPGGTYLSEKIPIPNAEPGTFSLRK). Residues 55 to 75 (LWAFTGPGFLMSIAYLDPGNI) form a helical membrane-spanning segment. At 76–81 (QSDLQA) the chain is on the extracellular side. The helical transmembrane segment at 82–102 (GAVAGFKLLWVLLWATVLGLL) threads the bilayer. The Cytoplasmic segment spans residues 103-139 (CQRLAARLGVVTGKDLGEICHLYYPKVPRTLLWLNME). A helical transmembrane segment spans residues 140 to 160 (LAIVGSDMQEVIGTAIAFNLL). The Extracellular segment spans residues 161–164 (SAGR). Residues 165–185 (IPLWGGVLITVVDTFFFLYLN) form a helical membrane-spanning segment. Residues 186-193 (NYGLRKLE) are Cytoplasmic-facing. Residues 194-214 (AFFAFLIAIMAFTFGYEYVVA) form a helical membrane-spanning segment. Residues 215 to 240 (RPAQGALLRGLFLPSCSGCGQPELLQ) lie on the Extracellular side of the membrane. The chain crosses the membrane as a helical span at residues 241–261 (AVGIVGAIIMPHNIYLHSALV). Residues 262-286 (KSREVDRTRREDIREANMYFLIEST) lie on the Cytoplasmic side of the membrane. Residues 287 to 307 (IALFVSFFINLFVMAVFGQAF) form a helical membrane-spanning segment. The Extracellular portion of the chain corresponds to 308–346 (YQQTNQAAFNICANSSLHDYAKIFPRNNLTVAVDFYQGG). Residues Asn-321 and Asn-335 are each glycosylated (N-linked (GlcNAc...) asparagine). Residues 347 to 367 (VILGCLFGPAALYIWAVGLLA) traverse the membrane as a helical segment. Residues 368–394 (AGQSSTMTGTYAGQFVMEGFLKLRWSR) lie on the Cytoplasmic side of the membrane. A helical transmembrane segment spans residues 395-415 (FARLLLTRSCAILPALLVAVF). The Extracellular segment spans residues 416–432 (KELQDLSSLNDLLNVLQ). Residues 433–453 (SLLLPFAVLPILTFTSMPALM) traverse the membrane as a helical segment. The Cytoplasmic portion of the chain corresponds to 454-468 (QEFASGRVNKVITSS). The helical transmembrane segment at 469–489 (IMLLVCAINFYFLVSYLPSLP) threads the bilayer. The Extracellular segment spans residues 490–492 (HPA). Residues 493–513 (YFGLVALLAVIYLGLTTYLVW) form a helical membrane-spanning segment. At 514-538 (TCLIAHGATLLVHSSHQHFLYGLLE) the chain is on the cytoplasmic side.

The protein belongs to the NRAMP family.

Its subcellular location is the late endosome membrane. The protein resides in the lysosome membrane. It carries out the reaction Zn(2+)(in) + H(+)(out) = Zn(2+)(out) + H(+)(in). The catalysed reaction is Fe(2+)(in) + H(+)(out) = Fe(2+)(out) + H(+)(in). The enzyme catalyses Mn(2+)(in) + H(+)(out) = Mn(2+)(out) + H(+)(in). Functionally, macrophage-specific antiporter that fluxes metal ions in either direction against a proton gradient. Localized to late endosomal lysosomal membranes, delivers bivalent cations from the cytosol into these acidic compartments where they may directly affect antimicrobial activity. Involved in iron metabolism and host natural resistance to infection with intracellular parasites. Pathogen resistance involves sequestration of Fe(2+) and Mn(2+), cofactors of both prokaryotic and eukaryotic catalases and superoxide dismutases, not only to protect the macrophage against its own generation of reactive oxygen species, but to deny the cations to the pathogen for synthesis of its protective enzymes. This Sus scrofa (Pig) protein is Natural resistance-associated macrophage protein 1 (SLC11A1).